Reading from the N-terminus, the 224-residue chain is tRNA (guanine-N(7)-)-methyltransferase (224 aa).

S-adenosyl-L-methionine is bound by residues E45, E70, D97, and D119. The active site involves D119. Substrate contacts are provided by residues K123, D155, and 199-202; that span reads TEYE.

It belongs to the class I-like SAM-binding methyltransferase superfamily. TrmB family.

It catalyses the reaction guanosine(46) in tRNA + S-adenosyl-L-methionine = N(7)-methylguanosine(46) in tRNA + S-adenosyl-L-homocysteine. It functions in the pathway tRNA modification; N(7)-methylguanine-tRNA biosynthesis. In terms of biological role, catalyzes the formation of N(7)-methylguanine at position 46 (m7G46) in tRNA. This chain is tRNA (guanine-N(7)-)-methyltransferase, found in Ureaplasma parvum serovar 3 (strain ATCC 27815 / 27 / NCTC 11736).